Consider the following 715-residue polypeptide: MSKQVFETTLAGKPLRVEVGEIAKQANGAAMIYYGDTVVLSTAVAKAKVGQTDFFPLMVIYAEKQYAAGKIPGGFFRREGRPSEVETLTSRLIDRPLRPLFDDGYRNEVQVVNTVLSSDPEASSQMAAMLGSSIALEISNIPFMGPIAGAHVGRIDGQFVLNPSSEQLNVSDIDLIVAGTKDAINMVEAGAKQVSEEVMLEAILFGHEAIKELCAFQETIKKAFGVEKVEPELLSLNQAIFDEVFAYKGKELVKAVSLVDKQERYDVIDAIKDEVVAHFEQRNFWMTVDGKEVLDADQKKELMNQVKVSLDRIVTKEVRRLITEDKVRPDGRGLDEIRPLASSVDLLPRTHGSALFTRGQTQALGIVTLGSLNENQIIDGLEQETVTKRFMLHYNFPPFSVGETGRYGAPGRREIGHGALGERALLQVLPSEDEFPYAIRVVSEITESNGSSSQATICVGSMALMAAGVPIKAPVAGIAMGLIMDGEHYSILSDIQGMEDHEGDMDFKVAGTKDGITALQMDIKIQGITTEIMKEALEQARKGRLHILSHMNTVISETRTELSAFAPKVKMIRINPDKIRDVIGAGGKIITQIIEDHNNVKIDIEQDGRVFIMHTDSAWLNKTAAYIESLVREAKVGELYEAKVTRLLMDKDGKKIQGVFAEIFPGTEGLVHISKWEKERTESLDGKVKVGDQILVKVVKIDERGRVDLSRKDAL.

Residues Asp-500 and Asp-506 each coordinate Mg(2+). A KH domain is found at 567-634 (PKVKMIRINP…AYIESLVREA (68 aa)). The S1 motif domain occupies 637 to 712 (GELYEAKVTR…ERGRVDLSRK (76 aa)).

It belongs to the polyribonucleotide nucleotidyltransferase family. It depends on Mg(2+) as a cofactor.

The protein localises to the cytoplasm. The catalysed reaction is RNA(n+1) + phosphate = RNA(n) + a ribonucleoside 5'-diphosphate. Functionally, involved in mRNA degradation. Catalyzes the phosphorolysis of single-stranded polyribonucleotides processively in the 3'- to 5'-direction. The sequence is that of Polyribonucleotide nucleotidyltransferase from Acholeplasma laidlawii (strain PG-8A).